A 2210-amino-acid polypeptide reads, in one-letter code: Filamin-A (2210 aa).

Calponin-homology (CH) domains lie at 15–120 and 139–242; these read KIQQ…LHYS and HTPK…NSKL. 20 Filamin repeats span residues 249-347, 349-447, 448-544, 545-635, 638-734, 735-831, 832-929, 930-1022, 1023-1121, 1122-1217, 1218-1312, 1322-1423, 1424-1515, 1516-1603, 1606-1698, 1699-1796, 1799-1891, 1893-1986, 1988-2079, and 2116-2210; these read RPKT…PVKV, GHAG…PVKV, APLS…EVKV, GPKK…IAQI, RTDF…RVYV, GVPV…VVVE, QTVD…VVNV, KSGC…RVLV, EETV…VMTV, FPKS…KLEA, FPTG…SIKA, SEYI…KFHV, DSIT…FAKI, TGEG…KVTV, REVG…TVKV, AGEG…QFTV, LRDS…KVYV, PDAG…RIKV, KDVA…KVNA, and TFKS…QIDV.

It belongs to the filamin family. As to quaternary structure, interacts with Ten-m. Germline-specific in females (at protein level). Expressed in ovary.

Its subcellular location is the cytoplasm. It is found in the cytoskeleton. The protein resides in the cell membrane. Involved in the germline ring canal formation. May tether actin microfilament within the ovarian ring canal to the cell membrane. Contributes to actin microfilaments organization. The chain is Filamin-A (cher) from Drosophila melanogaster (Fruit fly).